A 210-amino-acid polypeptide reads, in one-letter code: Fibrillarin-like rRNA/tRNA 2'-O-methyltransferase (210 aa).

S-adenosyl-L-methionine-binding positions include 70-71, 88-89, 113-114, and 133-136; these read TT, EY, DA, and DIAQ.

This sequence belongs to the methyltransferase superfamily. Fibrillarin family. In terms of assembly, interacts with nop5. Component of box C/D small ribonucleoprotein (sRNP) particles that contain rpl7ae, FlpA and nop5, plus a guide RNA.

Involved in pre-rRNA and tRNA processing. Utilizes the methyl donor S-adenosyl-L-methionine to catalyze the site-specific 2'-hydroxyl methylation of ribose moieties in rRNA and tRNA. Site specificity is provided by a guide RNA that base pairs with the substrate. Methylation occurs at a characteristic distance from the sequence involved in base pairing with the guide RNA. The sequence is that of Fibrillarin-like rRNA/tRNA 2'-O-methyltransferase from Archaeoglobus fulgidus (strain ATCC 49558 / DSM 4304 / JCM 9628 / NBRC 100126 / VC-16).